We begin with the raw amino-acid sequence, 787 residues long: Endonuclease MutS2 (787 aa).

Position 334 to 341 (334 to 341 (GPNTGGKT)) interacts with ATP. A disordered region spans residues 685–709 (KAQDPAKSAKQPRASVKRSGSSGMS). Positions 712 to 787 (LDLRGHRYEE…GDGSTVVHFK (76 aa)) constitute a Smr domain.

Belongs to the DNA mismatch repair MutS family. MutS2 subfamily. Homodimer. Binds to stalled ribosomes, contacting rRNA.

Its function is as follows. Endonuclease that is involved in the suppression of homologous recombination and thus may have a key role in the control of bacterial genetic diversity. In terms of biological role, acts as a ribosome collision sensor, splitting the ribosome into its 2 subunits. Detects stalled/collided 70S ribosomes which it binds and splits by an ATP-hydrolysis driven conformational change. Acts upstream of the ribosome quality control system (RQC), a ribosome-associated complex that mediates the extraction of incompletely synthesized nascent chains from stalled ribosomes and their subsequent degradation. Probably generates substrates for RQC. The polypeptide is Endonuclease MutS2 (Levilactobacillus brevis (strain ATCC 367 / BCRC 12310 / CIP 105137 / JCM 1170 / LMG 11437 / NCIMB 947 / NCTC 947) (Lactobacillus brevis)).